A 309-amino-acid chain; its full sequence is Protoheme IX farnesyltransferase 2 (309 aa).

8 helical membrane passes run Phe35 to Val55, Met59 to Ile79, Ala107 to Trp127, Leu131 to Leu151, Ile159 to Gly179, Trp186 to Ala206, Leu238 to Ile258, and Phe289 to Leu309.

Belongs to the UbiA prenyltransferase family. Protoheme IX farnesyltransferase subfamily.

Its subcellular location is the cell inner membrane. The catalysed reaction is heme b + (2E,6E)-farnesyl diphosphate + H2O = Fe(II)-heme o + diphosphate. It functions in the pathway porphyrin-containing compound metabolism; heme O biosynthesis; heme O from protoheme: step 1/1. Converts heme B (protoheme IX) to heme O by substitution of the vinyl group on carbon 2 of heme B porphyrin ring with a hydroxyethyl farnesyl side group. The chain is Protoheme IX farnesyltransferase 2 from Pseudoalteromonas translucida (strain TAC 125).